A 686-amino-acid polypeptide reads, in one-letter code: Delta-like protein 4 (686 aa).

The N-terminal stretch at 1-26 (MTPASRSACRWALLLLAVLWPQQRAA) is a signal peptide. At 27–532 (GSGIFQLRLQ…GLPPSFPWVA (506 aa)) the chain is on the extracellular side. 2 cysteine pairs are disulfide-bonded: Cys-51-Cys-55 and Cys-62-Cys-75. N-linked (GlcNAc...) asparagine glycosylation is found at Asn-79, Asn-109, and Asn-162. The region spanning 174 to 218 (VICSDNYYGESCSRLCKKRDDHFGHYECQPDGSLSCLPGWTGKYC) is the DSL domain. Cys-176 and Cys-185 are oxidised to a cystine. Interaction with Notch1 stretches follow at residues 186–188 (SRL) and 192–196 (RDDHF). Cystine bridges form between Cys-189–Cys-201, Cys-209–Cys-218, Cys-223–Cys-234, Cys-227–Cys-240, Cys-242–Cys-251, Cys-254–Cys-265, Cys-260–Cys-271, Cys-273–Cys-282, Cys-289–Cys-301, Cys-295–Cys-311, Cys-313–Cys-322, Cys-329–Cys-340, Cys-334–Cys-349, Cys-351–Cys-360, Cys-367–Cys-378, Cys-372–Cys-389, Cys-391–Cys-400, Cys-407–Cys-418, Cys-412–Cys-427, Cys-429–Cys-438, Cys-445–Cys-456, Cys-450–Cys-465, Cys-467–Cys-476, Cys-485–Cys-496, Cys-490–Cys-507, and Cys-509–Cys-518. 8 EGF-like domains span residues 219-252 (DQPI…RLCN), 253-283 (ECIP…LFCD), 285-323 (DLNY…EHCE), 325-361 (GLSK…QHCE), 364-401 (TLTC…SNCE), 403-439 (KVDR…THCE), 441-477 (HISD…RRCE), and 481-519 (THDA…SRCE). Asn-297 carries an N-linked (GlcNAc...) asparagine glycan. Residue Asn-394 is glycosylated (N-linked (GlcNAc...) asparagine). Residues 533–553 (VSLGVGLVVLLVLLVMVVVAV) form a helical membrane-spanning segment. The Cytoplasmic segment spans residues 554–686 (RQLRLRRPDD…RNECVIATEV (133 aa)).

As to quaternary structure, interacts with NOTCH4. Interacts (via N-terminal DSL and MNNL domains) with NOTCH1 (via EGF-like domains). In terms of tissue distribution, expressed in vascular endothelium. Expressed in retina at least during embryogenesis.

Its subcellular location is the cell membrane. Its function is as follows. Involved in the Notch signaling pathway as Notch ligand. Activates NOTCH1 and NOTCH4. Involved in angiogenesis; negatively regulates endothelial cell proliferation and migration and angiogenic sprouting. Essential for retinal progenitor proliferation. Required for suppressing rod fates in late retinal progenitors as well as for proper generation of other retinal cell types. During spinal cord neurogenesis, inhibits V2a interneuron fate. This chain is Delta-like protein 4 (Dll4), found in Mus musculus (Mouse).